Here is a 368-residue protein sequence, read N- to C-terminus: Large ribosomal subunit protein mL46 (368 aa).

A disordered region spans residues 53–81 (TATATTTTTLPPPHPPVTTSTGTHAATST). Low complexity predominate over residues 69 to 81 (VTTSTGTHAATST).

This sequence belongs to the mitochondrion-specific ribosomal protein mL46 family. In terms of assembly, component of the mitochondrial large ribosomal subunit (mt-LSU). Mature N.crassa 74S mitochondrial ribosomes consist of a small (37S) and a large (54S) subunit. The 37S small subunit contains a 16S ribosomal RNA (16S mt-rRNA) and 32 different proteins. The 54S large subunit contains a 23S rRNA (23S mt-rRNA) and 42 different proteins.

The protein resides in the mitochondrion. In terms of biological role, component of the mitochondrial ribosome (mitoribosome), a dedicated translation machinery responsible for the synthesis of mitochondrial genome-encoded proteins, including at least some of the essential transmembrane subunits of the mitochondrial respiratory chain. The mitoribosomes are attached to the mitochondrial inner membrane and translation products are cotranslationally integrated into the membrane. The chain is Large ribosomal subunit protein mL46 (mrpl17) from Neurospora crassa (strain ATCC 24698 / 74-OR23-1A / CBS 708.71 / DSM 1257 / FGSC 987).